The following is a 132-amino-acid chain: ATP synthase epsilon chain, chloroplastic (132 aa).

Belongs to the ATPase epsilon chain family. In terms of assembly, F-type ATPases have 2 components, CF(1) - the catalytic core - and CF(0) - the membrane proton channel. CF(1) has five subunits: alpha(3), beta(3), gamma(1), delta(1), epsilon(1). CF(0) has three main subunits: a, b and c.

Its subcellular location is the plastid. The protein localises to the chloroplast thylakoid membrane. Functionally, produces ATP from ADP in the presence of a proton gradient across the membrane. The polypeptide is ATP synthase epsilon chain, chloroplastic (Pylaiella littoralis (Seaweed)).